A 498-amino-acid chain; its full sequence is Lysine--tRNA ligase (498 aa).

Mg(2+) contacts are provided by glutamate 408 and glutamate 415.

The protein belongs to the class-II aminoacyl-tRNA synthetase family. Homodimer. Mg(2+) serves as cofactor.

It localises to the cytoplasm. It catalyses the reaction tRNA(Lys) + L-lysine + ATP = L-lysyl-tRNA(Lys) + AMP + diphosphate. This Listeria innocua serovar 6a (strain ATCC BAA-680 / CLIP 11262) protein is Lysine--tRNA ligase.